The following is a 106-amino-acid chain: Large ribosomal subunit protein uL24 (106 aa).

Belongs to the universal ribosomal protein uL24 family. Part of the 50S ribosomal subunit.

One of two assembly initiator proteins, it binds directly to the 5'-end of the 23S rRNA, where it nucleates assembly of the 50S subunit. Its function is as follows. One of the proteins that surrounds the polypeptide exit tunnel on the outside of the subunit. The sequence is that of Large ribosomal subunit protein uL24 from Marinobacter nauticus (strain ATCC 700491 / DSM 11845 / VT8) (Marinobacter aquaeolei).